A 1070-amino-acid polypeptide reads, in one-letter code: Isoleucine--tRNA ligase (1070 aa).

Positions 50–60 (PYTSGAAHMGT) match the 'HIGH' region motif. The short motif at 606–610 (GMSKS) is the 'KMSKS' region element. Lys-609 is a binding site for ATP.

This sequence belongs to the class-I aminoacyl-tRNA synthetase family. IleS type 2 subfamily. Monomer. Zn(2+) serves as cofactor.

The protein resides in the cytoplasm. The enzyme catalyses tRNA(Ile) + L-isoleucine + ATP = L-isoleucyl-tRNA(Ile) + AMP + diphosphate. Catalyzes the attachment of isoleucine to tRNA(Ile). As IleRS can inadvertently accommodate and process structurally similar amino acids such as valine, to avoid such errors it has two additional distinct tRNA(Ile)-dependent editing activities. One activity is designated as 'pretransfer' editing and involves the hydrolysis of activated Val-AMP. The other activity is designated 'posttransfer' editing and involves deacylation of mischarged Val-tRNA(Ile). The protein is Isoleucine--tRNA ligase of Halobacterium salinarum (strain ATCC 700922 / JCM 11081 / NRC-1) (Halobacterium halobium).